A 142-amino-acid polypeptide reads, in one-letter code: Putative pre-16S rRNA nuclease (142 aa).

It belongs to the YqgF nuclease family.

Its subcellular location is the cytoplasm. In terms of biological role, could be a nuclease involved in processing of the 5'-end of pre-16S rRNA. In Shouchella clausii (strain KSM-K16) (Alkalihalobacillus clausii), this protein is Putative pre-16S rRNA nuclease.